Consider the following 60-residue polypeptide: Large ribosomal subunit protein uL30 (60 aa).

This sequence belongs to the universal ribosomal protein uL30 family. In terms of assembly, part of the 50S ribosomal subunit.

The polypeptide is Large ribosomal subunit protein uL30 (Dehalococcoides mccartyi (strain ATCC BAA-2100 / JCM 16839 / KCTC 5957 / BAV1)).